The sequence spans 151 residues: Putative pre-16S rRNA nuclease (151 aa).

The protein belongs to the YqgF nuclease family.

It is found in the cytoplasm. Could be a nuclease involved in processing of the 5'-end of pre-16S rRNA. In Paraburkholderia phymatum (strain DSM 17167 / CIP 108236 / LMG 21445 / STM815) (Burkholderia phymatum), this protein is Putative pre-16S rRNA nuclease.